We begin with the raw amino-acid sequence, 430 residues long: MGQSVVVLGAQWGDEGKGKIVDLLTEEIGAVVRFQGGHNAGHTLVINGKKTVLHLIPSGILRDDALCLIGNGVVISPAALIKEVSELEDAGVEVRSRLKISPAAPLIMPYHIALDQAREKAAGGKAIGTTGRGIGPAYEDKVARRGIRIADLHYPPQLEELLRTALDYHNFVLTKYLGVEAVDFQKTYDEALAFGDYVQPMKSDVAGILHDLRKQGKRVLFEGAQGALLDIDHGTYPYVTSSNTTVGGALAGTGVGADAIDYVLGIAKAYATRVGGGPFPTELDDEVGQGIRDRGAEYGASTGRPRRCGWMDIVALKRAVAINGISGLCITKLDVLDGMEKLKVCIAYEYRGKRTEYAPLDAQGWEECTPVYLEFPGWTENTHGITEWDKLPVAARAYLRALEELAGCPISIVSTGPDRDHTMVLQDPFA.

GTP is bound by residues 13–19 (GDEGKGK) and 41–43 (GHT). The Proton acceptor role is filled by aspartate 14. Residues aspartate 14 and glycine 41 each contribute to the Mg(2+) site. Residues 14-17 (DEGK), 39-42 (NAGH), threonine 130, arginine 144, glutamine 225, threonine 240, and arginine 304 each bind IMP. The active-site Proton donor is the histidine 42. 300 to 306 (ASTGRPR) contacts substrate. GTP is bound by residues arginine 306, 332 to 334 (KLD), and 414 to 416 (STG).

This sequence belongs to the adenylosuccinate synthetase family. In terms of assembly, homodimer. The cofactor is Mg(2+).

It localises to the cytoplasm. It carries out the reaction IMP + L-aspartate + GTP = N(6)-(1,2-dicarboxyethyl)-AMP + GDP + phosphate + 2 H(+). The protein operates within purine metabolism; AMP biosynthesis via de novo pathway; AMP from IMP: step 1/2. Its function is as follows. Plays an important role in the de novo pathway of purine nucleotide biosynthesis. Catalyzes the first committed step in the biosynthesis of AMP from IMP. This is Adenylosuccinate synthetase from Xanthomonas oryzae pv. oryzae (strain PXO99A).